We begin with the raw amino-acid sequence, 64 residues long: Disintegrin (64 aa).

The Disintegrin domain occupies 1-64 (NSVHPCCDPV…SDCPRNRYNH (64 aa)). Disulfide bonds link Cys-6–Cys-29, Cys-20–Cys-26, Cys-25–Cys-50, and Cys-38–Cys-57. Residues 42–44 (MLD) carry the Cell attachment site; atypical (MLD) motif.

This sequence belongs to the disintegrin family. Dimeric disintegrin subfamily. In terms of assembly, heterodimer; disulfide-linked. As to expression, expressed by the venom gland.

Its subcellular location is the secreted. Functionally, inhibits adhesion of cells expressing alpha-4/beta-1 (ITGA4/ITGB1) and alpha-4/beta-7 (ITGA4/ITGB7) integrins to the natural ligands vascular cell adhesion molecule 1 (VCAM-1) and mucosal addressin cell adhesion molecule 1 (MADCAM-1). The protein is Disintegrin of Echis carinatus (Saw-scaled viper).